Here is a 414-residue protein sequence, read N- to C-terminus: Protein RecA (414 aa).

78–85 is a binding site for ATP; that stretch reads GPESSGKT. The segment covering 361–384 has biased composition (basic and acidic residues); that stretch reads QEKAVEALKKEEGSKEDALTGNKD. Residues 361–414 form a disordered region; sequence QEKAVEALKKEEGSKEDALTGNKDETDDSAQKNSAASKAKRAEVVGLPADDSLF.

The protein belongs to the RecA family.

Its subcellular location is the cytoplasm. In terms of biological role, can catalyze the hydrolysis of ATP in the presence of single-stranded DNA, the ATP-dependent uptake of single-stranded DNA by duplex DNA, and the ATP-dependent hybridization of homologous single-stranded DNAs. It interacts with LexA causing its activation and leading to its autocatalytic cleavage. The sequence is that of Protein RecA from Treponema denticola (strain ATCC 35405 / DSM 14222 / CIP 103919 / JCM 8153 / KCTC 15104).